The chain runs to 725 residues: Glutamine-dependent NAD(+) synthetase (725 aa).

The region spanning valine 5–leucine 275 is the CN hydrolase domain. The active-site Proton acceptor; for glutaminase activity is the glutamate 45. The For glutaminase activity role is filled by lysine 114. Catalysis depends on cysteine 175, which acts as the Nucleophile; for glutaminase activity. Positions tyrosine 325–isoleucine 706 are ligase. Position 355–362 (proline 355–serine 362) interacts with ATP. The active site involves serine 357.

This sequence in the C-terminal section; belongs to the NAD synthetase family. As to quaternary structure, homohexamer.

It catalyses the reaction deamido-NAD(+) + L-glutamine + ATP + H2O = L-glutamate + AMP + diphosphate + NAD(+) + H(+). It functions in the pathway cofactor biosynthesis; NAD(+) biosynthesis; NAD(+) from deamido-NAD(+) (L-Gln route): step 1/1. Functionally, catalyzes the final step of the nicotinamide adenine dinucleotide (NAD) de novo synthesis pathway, the ATP-dependent amidation of deamido-NAD using L-glutamine as a nitrogen source. In Rattus norvegicus (Rat), this protein is Glutamine-dependent NAD(+) synthetase (Nadsyn1).